Consider the following 449-residue polypeptide: L10-interacting MYB domain-containing protein (449 aa).

The 64-residue stretch at 162 to 225 folds into the Myb-like domain; that stretch reads SNPQTKGYWS…YTRPQLKNHW (64 aa). The segment at 297 to 324 is disordered; it reads TYTPPSRSRKKLLHNRSESPQWRDTTPL. Over residues 314-324 the composition is skewed to polar residues; the sequence is ESPQWRDTTPL.

Interacts with RPL10A. Expressed in seedlings, leaves, roots, stems and flowers.

It localises to the nucleus. Its function is as follows. Transcriptional repressor that associates with ribosomal protein promoters. The chain is L10-interacting MYB domain-containing protein from Arabidopsis thaliana (Mouse-ear cress).